The sequence spans 465 residues: Pancreatic triacylglycerol lipase (465 aa).

The signal sequence occupies residues 1-16 (MLLVWSLALLLGAVAG). Intrachain disulfides connect C20/C26 and C107/C118. S169 functions as the Nucleophile in the catalytic mechanism. Residue D193 is the Charge relay system of the active site. The Ca(2+) site is built by E204, R207, D209, and D212. Residues C254 and C278 are joined by a disulfide bond. Residue H280 is the Charge relay system of the active site. Intrachain disulfides connect C302/C313, C316/C321, and C449/C465. Positions 355 to 465 (WRYKVSVTLS…EDVLLTLNAC (111 aa)) constitute a PLAT domain.

This sequence belongs to the AB hydrolase superfamily. Lipase family. Forms a 1:1 stoichiometric complex with (pro)colipase/CLPS. Expressed in many tissues with highest expression in liver. During hibernation there is a significant increases in expression in heart, white adipose tissue (WAT), and testis; but not in pancreas.

Its subcellular location is the secreted. It carries out the reaction a triacylglycerol + H2O = a diacylglycerol + a fatty acid + H(+). The enzyme catalyses 1,2,3-tributanoylglycerol + H2O = dibutanoylglycerol + butanoate + H(+). It catalyses the reaction 1,2,3-tri-(9Z-octadecenoyl)-glycerol + H2O = di-(9Z)-octadecenoylglycerol + (9Z)-octadecenoate + H(+). The catalysed reaction is all-trans-retinyl hexadecanoate + H2O = all-trans-retinol + hexadecanoate + H(+). It carries out the reaction 1,2-di-(9Z-octadecenoyl)-glycerol + H2O = (9Z-octadecenoyl)-glycerol + (9Z)-octadecenoate + H(+). With respect to regulation, inhibited by bile salts, is reactivated by (pro)colipase/CLPS. Its function is as follows. Plays an important role in fat metabolism. It preferentially splits the esters of long-chain fatty acids at positions 1 and 3, producing mainly 2-monoacylglycerol and free fatty acids, and shows considerably higher activity against insoluble emulsified substrates than against soluble ones. Plays a role in hibernation as a key enzyme that shows high activity at low temperatures. When expressed in the hibernating heart it liberates fatty acids from triglycerides at temperatures as low as 0 degrees Celsius. The chain is Pancreatic triacylglycerol lipase (PNLIP) from Ictidomys tridecemlineatus (Thirteen-lined ground squirrel).